Reading from the N-terminus, the 197-residue chain is ATP-dependent Clp protease proteolytic subunit (197 aa).

S98 functions as the Nucleophile in the catalytic mechanism. H123 is a catalytic residue.

This sequence belongs to the peptidase S14 family. Fourteen ClpP subunits assemble into 2 heptameric rings which stack back to back to give a disk-like structure with a central cavity, resembling the structure of eukaryotic proteasomes.

It is found in the cytoplasm. The catalysed reaction is Hydrolysis of proteins to small peptides in the presence of ATP and magnesium. alpha-casein is the usual test substrate. In the absence of ATP, only oligopeptides shorter than five residues are hydrolyzed (such as succinyl-Leu-Tyr-|-NHMec, and Leu-Tyr-Leu-|-Tyr-Trp, in which cleavage of the -Tyr-|-Leu- and -Tyr-|-Trp bonds also occurs).. Cleaves peptides in various proteins in a process that requires ATP hydrolysis. Has a chymotrypsin-like activity. Plays a major role in the degradation of misfolded proteins. This Lysinibacillus sphaericus (strain C3-41) protein is ATP-dependent Clp protease proteolytic subunit.